We begin with the raw amino-acid sequence, 320 residues long: Cytochrome f (320 aa).

The N-terminal stretch at methionine 1–alanine 35 is a signal peptide. Residues tyrosine 36, cysteine 56, cysteine 59, and histidine 60 each coordinate heme. A helical transmembrane segment spans residues valine 286–leucine 305.

Belongs to the cytochrome f family. As to quaternary structure, the 4 large subunits of the cytochrome b6-f complex are cytochrome b6, subunit IV (17 kDa polypeptide, petD), cytochrome f and the Rieske protein, while the 4 small subunits are PetG, PetL, PetM and PetN. The complex functions as a dimer. Heme serves as cofactor.

It is found in the plastid. It localises to the chloroplast thylakoid membrane. Its function is as follows. Component of the cytochrome b6-f complex, which mediates electron transfer between photosystem II (PSII) and photosystem I (PSI), cyclic electron flow around PSI, and state transitions. The sequence is that of Cytochrome f (petA) from Triticum aestivum (Wheat).